A 207-amino-acid polypeptide reads, in one-letter code: Small ribosomal subunit protein uS4 (207 aa).

A disordered region spans residues K22 to L54. Over residues S27–P38 the composition is skewed to basic and acidic residues. Over residues G42–F52 the composition is skewed to polar residues. Residues S97–I157 form the S4 RNA-binding domain.

It belongs to the universal ribosomal protein uS4 family. Part of the 30S ribosomal subunit. Contacts protein S5. The interaction surface between S4 and S5 is involved in control of translational fidelity.

In terms of biological role, one of the primary rRNA binding proteins, it binds directly to 16S rRNA where it nucleates assembly of the body of the 30S subunit. With S5 and S12 plays an important role in translational accuracy. This chain is Small ribosomal subunit protein uS4, found in Leptothrix cholodnii (strain ATCC 51168 / LMG 8142 / SP-6) (Leptothrix discophora (strain SP-6)).